The following is an 887-amino-acid chain: DNA mismatch repair protein MutS (887 aa).

Residue 626–633 (GPNMAGKS) participates in ATP binding.

Belongs to the DNA mismatch repair MutS family.

This protein is involved in the repair of mismatches in DNA. It is possible that it carries out the mismatch recognition step. This protein has a weak ATPase activity. This is DNA mismatch repair protein MutS from Methanococcoides burtonii (strain DSM 6242 / NBRC 107633 / OCM 468 / ACE-M).